We begin with the raw amino-acid sequence, 456 residues long: NAD-dependent deacetylase sir2C (456 aa).

Residues 161–443 (IEIENNKIKE…LNLSKLLNWD (283 aa)) form the Deacetylase sirtuin-type domain. The active-site Proton acceptor is the histidine 294. Positions 302, 305, 331, and 336 each coordinate Zn(2+).

This sequence belongs to the sirtuin family. It depends on Zn(2+) as a cofactor.

It carries out the reaction N(6)-acetyl-L-lysyl-[protein] + NAD(+) + H2O = 2''-O-acetyl-ADP-D-ribose + nicotinamide + L-lysyl-[protein]. In terms of biological role, NAD-dependent deacetylase, which plays an important role in the regulation of transcriptional repression. The polypeptide is NAD-dependent deacetylase sir2C (sir2C) (Dictyostelium discoideum (Social amoeba)).